Reading from the N-terminus, the 53-residue chain is uncharacterized protein (53 aa).

This sequence belongs to the ELIP/psbS family.

It is found in the plastid. It localises to the chloroplast. Functionally, possible role in chlorophyll and/or carotenoid binding. This is an uncharacterized protein from Guillardia theta (Cryptophyte).